The chain runs to 154 residues: Heat shock protein beta-3 (154 aa).

Residues 48–71 (ARGAGTPQALAEDSASTEKPPGEG) are disordered. The 98-residue stretch at 57-154 (LAEDSASTEK…VEVKDSLGTK (98 aa)) folds into the sHSP domain.

This sequence belongs to the small heat shock protein (HSP20) family.

The protein resides in the cytoplasm. It is found in the nucleus. Inhibitor of actin polymerization. This Mus musculus (Mouse) protein is Heat shock protein beta-3 (Hspb3).